Here is a 78-residue protein sequence, read N- to C-terminus: Putative membrane protein insertion efficiency factor (78 aa).

Belongs to the UPF0161 family.

The protein resides in the cell inner membrane. Its function is as follows. Could be involved in insertion of integral membrane proteins into the membrane. In Thiobacillus denitrificans (strain ATCC 25259 / T1), this protein is Putative membrane protein insertion efficiency factor.